The chain runs to 199 residues: dITP/XTP pyrophosphatase (199 aa).

A substrate-binding site is contributed by Ser12 to Lys17. Asp73 functions as the Proton acceptor in the catalytic mechanism. Asp73 serves as a coordination point for Mg(2+). Substrate is bound by residues Ser74, Phe157–Asp160, Lys180, and His185–Arg186.

The protein belongs to the HAM1 NTPase family. In terms of assembly, homodimer. Mg(2+) serves as cofactor.

The catalysed reaction is XTP + H2O = XMP + diphosphate + H(+). The enzyme catalyses dITP + H2O = dIMP + diphosphate + H(+). It catalyses the reaction ITP + H2O = IMP + diphosphate + H(+). In terms of biological role, pyrophosphatase that catalyzes the hydrolysis of nucleoside triphosphates to their monophosphate derivatives, with a high preference for the non-canonical purine nucleotides XTP (xanthosine triphosphate), dITP (deoxyinosine triphosphate) and ITP. Seems to function as a house-cleaning enzyme that removes non-canonical purine nucleotides from the nucleotide pool, thus preventing their incorporation into DNA/RNA and avoiding chromosomal lesions. The protein is dITP/XTP pyrophosphatase of Neisseria meningitidis serogroup A / serotype 4A (strain DSM 15465 / Z2491).